An 89-amino-acid polypeptide reads, in one-letter code: Small ribosomal subunit protein uS15 (89 aa).

It belongs to the universal ribosomal protein uS15 family. As to quaternary structure, part of the 30S ribosomal subunit. Forms a bridge to the 50S subunit in the 70S ribosome, contacting the 23S rRNA.

One of the primary rRNA binding proteins, it binds directly to 16S rRNA where it helps nucleate assembly of the platform of the 30S subunit by binding and bridging several RNA helices of the 16S rRNA. Functionally, forms an intersubunit bridge (bridge B4) with the 23S rRNA of the 50S subunit in the ribosome. The polypeptide is Small ribosomal subunit protein uS15 (Parafrankia sp. (strain EAN1pec)).